The chain runs to 189 residues: 3-hydroxyanthranilate 3,4-dioxygenase (189 aa).

Residue Arg46 participates in O2 binding. Fe cation is bound by residues His50, Glu56, and His94. Glu56 provides a ligand contact to substrate. Residues Arg98 and Glu109 each coordinate substrate. The Fe cation site is built by Cys124, Cys127, Cys161, and Cys164.

The protein belongs to the 3-HAO family. As to quaternary structure, homodimer. The cofactor is Fe(2+).

The catalysed reaction is 3-hydroxyanthranilate + O2 = (2Z,4Z)-2-amino-3-carboxymuconate 6-semialdehyde. It functions in the pathway cofactor biosynthesis; NAD(+) biosynthesis; quinolinate from L-kynurenine: step 3/3. Catalyzes the oxidative ring opening of 3-hydroxyanthranilate to 2-amino-3-carboxymuconate semialdehyde, which spontaneously cyclizes to quinolinate. The chain is 3-hydroxyanthranilate 3,4-dioxygenase from Shewanella woodyi (strain ATCC 51908 / MS32).